The chain runs to 173 residues: Crossover junction endodeoxyribonuclease RuvC (173 aa).

Active-site residues include Asp8, Glu67, and Asp139. Mg(2+) contacts are provided by Asp8, Glu67, and Asp139.

It belongs to the RuvC family. As to quaternary structure, homodimer which binds Holliday junction (HJ) DNA. The HJ becomes 2-fold symmetrical on binding to RuvC with unstacked arms; it has a different conformation from HJ DNA in complex with RuvA. In the full resolvosome a probable DNA-RuvA(4)-RuvB(12)-RuvC(2) complex forms which resolves the HJ. Mg(2+) serves as cofactor.

The protein localises to the cytoplasm. The catalysed reaction is Endonucleolytic cleavage at a junction such as a reciprocal single-stranded crossover between two homologous DNA duplexes (Holliday junction).. Its function is as follows. The RuvA-RuvB-RuvC complex processes Holliday junction (HJ) DNA during genetic recombination and DNA repair. Endonuclease that resolves HJ intermediates. Cleaves cruciform DNA by making single-stranded nicks across the HJ at symmetrical positions within the homologous arms, yielding a 5'-phosphate and a 3'-hydroxyl group; requires a central core of homology in the junction. The consensus cleavage sequence is 5'-(A/T)TT(C/G)-3'. Cleavage occurs on the 3'-side of the TT dinucleotide at the point of strand exchange. HJ branch migration catalyzed by RuvA-RuvB allows RuvC to scan DNA until it finds its consensus sequence, where it cleaves and resolves the cruciform DNA. This chain is Crossover junction endodeoxyribonuclease RuvC, found in Baumannia cicadellinicola subsp. Homalodisca coagulata.